We begin with the raw amino-acid sequence, 335 residues long: MTANVGINGFGRIGRLVLRIALSRDDINVIAINDPFIAPDYAAYMFKYDSTHGKFKGTVTHEGKYLVINGKKIEVFQERDPANIPWGKEGVDYVLDSTGVFTTIEGAQKHIDAGAKKVIITAPSKDAPMFVVGVNHEEYTPDIKILSNASCTTNCLAPLAKVINDTYGIEEGLMTTIHSITATQKTVDGPSHKDWRGGRTASGNIIPSSTGAAKAVGKVLPALAGKLTGMSMRVPTTDVSVVDLTVNLKKPTTYEDICATMKKAAEGPLAGILGYTDEAVVSSDFLTDSRSSVFDAKAGILLTPTFVKLVSWYDNEYGYSTRVVDLLQHVAKVSA.

NAD(+) is bound by residues 12–13 (RI), Asp34, and Arg79. D-glyceraldehyde 3-phosphate is bound by residues 150–152 (SCT), Thr181, 210–211 (TG), and Arg233. Cys151 (nucleophile) is an active-site residue. Residue Asn315 coordinates NAD(+).

This sequence belongs to the glyceraldehyde-3-phosphate dehydrogenase family. In terms of assembly, homotetramer.

The protein resides in the cytoplasm. It carries out the reaction D-glyceraldehyde 3-phosphate + phosphate + NAD(+) = (2R)-3-phospho-glyceroyl phosphate + NADH + H(+). It functions in the pathway carbohydrate degradation; glycolysis; pyruvate from D-glyceraldehyde 3-phosphate: step 1/5. In Ogataea parapolymorpha (strain ATCC 26012 / BCRC 20466 / JCM 22074 / NRRL Y-7560 / DL-1) (Yeast), this protein is Glyceraldehyde-3-phosphate dehydrogenase (GPD).